A 945-amino-acid polypeptide reads, in one-letter code: Leucine--tRNA ligase (945 aa).

Residues 43-53 (PYPNGAIHIGH) carry the 'HIGH' region motif. A 'KMSKS' region motif is present at residues 638–642 (KMSKS). Position 641 (lysine 641) interacts with ATP.

Belongs to the class-I aminoacyl-tRNA synthetase family.

The protein localises to the cytoplasm. The catalysed reaction is tRNA(Leu) + L-leucine + ATP = L-leucyl-tRNA(Leu) + AMP + diphosphate. The polypeptide is Leucine--tRNA ligase (Pyrobaculum aerophilum (strain ATCC 51768 / DSM 7523 / JCM 9630 / CIP 104966 / NBRC 100827 / IM2)).